Reading from the N-terminus, the 544-residue chain is Protein nucleotidyltransferase YdiU (544 aa).

ATP is bound by residues Gly-133, Gly-135, Arg-136, Lys-155, Asp-167, Gly-168, Arg-218, and Arg-225. The active-site Proton acceptor is Asp-294. 2 residues coordinate Mg(2+): Asn-295 and Asp-304. Asp-304 is a binding site for ATP.

This sequence belongs to the SELO family. Requires Mg(2+) as cofactor. Mn(2+) serves as cofactor.

It carries out the reaction L-seryl-[protein] + ATP = 3-O-(5'-adenylyl)-L-seryl-[protein] + diphosphate. The enzyme catalyses L-threonyl-[protein] + ATP = 3-O-(5'-adenylyl)-L-threonyl-[protein] + diphosphate. It catalyses the reaction L-tyrosyl-[protein] + ATP = O-(5'-adenylyl)-L-tyrosyl-[protein] + diphosphate. The catalysed reaction is L-histidyl-[protein] + UTP = N(tele)-(5'-uridylyl)-L-histidyl-[protein] + diphosphate. It carries out the reaction L-seryl-[protein] + UTP = O-(5'-uridylyl)-L-seryl-[protein] + diphosphate. The enzyme catalyses L-tyrosyl-[protein] + UTP = O-(5'-uridylyl)-L-tyrosyl-[protein] + diphosphate. In terms of biological role, nucleotidyltransferase involved in the post-translational modification of proteins. It can catalyze the addition of adenosine monophosphate (AMP) or uridine monophosphate (UMP) to a protein, resulting in modifications known as AMPylation and UMPylation. The protein is Protein nucleotidyltransferase YdiU of Cupriavidus metallidurans (strain ATCC 43123 / DSM 2839 / NBRC 102507 / CH34) (Ralstonia metallidurans).